A 278-amino-acid polypeptide reads, in one-letter code: Putative ABC transporter ATP-binding protein MJ1572 (278 aa).

The ABC transporter domain maps to 5–242 (YRLVDVSYKY…LDELNLDVPE (238 aa)). 38-45 (GPNGAGKT) provides a ligand contact to ATP.

Belongs to the ABC transporter superfamily.

Its subcellular location is the cell membrane. Probably part of an ABC transporter complex. Responsible for energy coupling to the transport system. This chain is Putative ABC transporter ATP-binding protein MJ1572, found in Methanocaldococcus jannaschii (strain ATCC 43067 / DSM 2661 / JAL-1 / JCM 10045 / NBRC 100440) (Methanococcus jannaschii).